Reading from the N-terminus, the 100-residue chain is Large ribosomal subunit protein uL23 (100 aa).

It belongs to the universal ribosomal protein uL23 family. Part of the 50S ribosomal subunit. Contacts protein L29, and trigger factor when it is bound to the ribosome.

In terms of biological role, one of the early assembly proteins it binds 23S rRNA. One of the proteins that surrounds the polypeptide exit tunnel on the outside of the ribosome. Forms the main docking site for trigger factor binding to the ribosome. In Synechococcus sp. (strain WH7803), this protein is Large ribosomal subunit protein uL23.